Here is a 515-residue protein sequence, read N- to C-terminus: Bifunctional purine biosynthesis protein PurH (515 aa).

One can recognise an MGS-like domain in the interval 1-145; sequence MTKRVLISVS…KNHASVTVVV (145 aa).

This sequence belongs to the PurH family.

It catalyses the reaction (6R)-10-formyltetrahydrofolate + 5-amino-1-(5-phospho-beta-D-ribosyl)imidazole-4-carboxamide = 5-formamido-1-(5-phospho-D-ribosyl)imidazole-4-carboxamide + (6S)-5,6,7,8-tetrahydrofolate. The catalysed reaction is IMP + H2O = 5-formamido-1-(5-phospho-D-ribosyl)imidazole-4-carboxamide. The protein operates within purine metabolism; IMP biosynthesis via de novo pathway; 5-formamido-1-(5-phospho-D-ribosyl)imidazole-4-carboxamide from 5-amino-1-(5-phospho-D-ribosyl)imidazole-4-carboxamide (10-formyl THF route): step 1/1. It participates in purine metabolism; IMP biosynthesis via de novo pathway; IMP from 5-formamido-1-(5-phospho-D-ribosyl)imidazole-4-carboxamide: step 1/1. The sequence is that of Bifunctional purine biosynthesis protein PurH from Streptococcus pneumoniae (strain 70585).